A 111-amino-acid polypeptide reads, in one-letter code: X antigen family member 2 (111 aa).

Disordered stretches follow at residues 1–61 and 77–111; these read MSWR…AAEI and KTGD…KSQV. Positions 86–111 are enriched in basic and acidic residues; that stretch reads TDVKGKILPKAEHFKMPEAGEGKSQV.

The protein belongs to the GAGE family.

This is X antigen family member 2 (XAGE2) from Homo sapiens (Human).